The primary structure comprises 481 residues: Matrilin-3 (481 aa).

Residues 1–27 form the signal peptide; the sequence is MLLSAPLRHLPGLLLLLWPLLLLPSLA. One can recognise a VWFA domain in the interval 78–253; that stretch reads DLVFIIDSSR…GVIEKLSARF (176 aa). The residue at position 193 (Arg-193) is an Omega-N-methylarginine. EGF-like domains lie at 259–300, 301–342, 343–384, and 385–426; these read ALDQ…KTCS, AIDK…RTCA, ALDK…KTCS, and VRNK…KTCS. 12 cysteine pairs are disulfide-bonded: Cys-263-Cys-274, Cys-270-Cys-284, Cys-286-Cys-299, Cys-305-Cys-316, Cys-312-Cys-326, Cys-328-Cys-341, Cys-347-Cys-358, Cys-354-Cys-368, Cys-370-Cys-383, Cys-389-Cys-400, Cys-396-Cys-410, and Cys-412-Cys-425. N-linked (GlcNAc...) asparagine glycosylation is present at Asn-321. Ser-436 bears the Phosphoserine; by FAM20C mark. Residues 451-475 are a coiled coil; sequence EKVSSHLQKLNTKLDNILKKLKVTE.

In terms of assembly, can form homooligomers (monomers, dimers, trimers and tetramers) and heterooligomers with matrilin-1. Interacts with COMP. Component of a complex containing at least CRELD2, MANF, MATN3 and PDIA4. As to expression, strongly expressed in growing skeletal tissue such as epiphyseal growth plate or in bone undergoing growth and remodeling. In the bone, actively synthesized in osteoblasts and osteocytes. Expressed in cartilage of sternum, femur, vertebrae, trachea, articular and epiphyseal cartilage, cartilage of developing bones and bones.

It localises to the secreted. In terms of biological role, major component of the extracellular matrix of cartilage and may play a role in the formation of extracellular filamentous networks. The sequence is that of Matrilin-3 (Matn3) from Mus musculus (Mouse).